The sequence spans 513 residues: uncharacterized protein (513 aa).

Disordered regions lie at residues 72–113 (GVVP…TGQF) and 155–262 (IMGG…NPRF). Residues 82–106 (ANRTANPNTNSNPNPNATNAQPNPT) show a composition bias toward low complexity. Composition is skewed to polar residues over residues 164–189 (EANSEQARNANTETSNPPFASAQTQG) and 210–228 (TPLNQPPSYAASTQPEFQQ). Positions 229–238 (TTSPIFSSSS) are enriched in low complexity. Residues 239–248 (TPPPPPPRPS) show a composition bias toward pro residues. A compositionally biased stretch (polar residues) spans 253 to 262 (GESQNTNPRF). The RING-type; atypical zinc-finger motif lies at 396 to 437 (CTICMEMFKINDDVIQLPCKHYFHENCIKPWLRVNGTCAICR). A disordered region spans residues 439 to 513 (PVDPNSQQRN…DDFVDEEPLE (75 aa)). Residues 442-493 (PNSQQRNNTSTDSANGHNPSNHANPSTSTTNDQGATLRNESFNAASQSNLSS) show a composition bias toward polar residues.

This is an uncharacterized protein from Schizosaccharomyces pombe (strain 972 / ATCC 24843) (Fission yeast).